Consider the following 192-residue polypeptide: NADH dehydrogenase [ubiquinone] iron-sulfur protein 3 (192 aa).

The protein belongs to the complex I 30 kDa subunit family. As to quaternary structure, complex I is composed of about 45 different subunits. This is a component of the iron-sulfur (IP) fragment of the enzyme.

Its subcellular location is the mitochondrion inner membrane. The catalysed reaction is a ubiquinone + NADH + 5 H(+)(in) = a ubiquinol + NAD(+) + 4 H(+)(out). In terms of biological role, core subunit of the mitochondrial membrane respiratory chain NADH dehydrogenase (Complex I) that is believed to belong to the minimal assembly required for catalysis. Complex I functions in the transfer of electrons from NADH to the respiratory chain. The immediate electron acceptor for the enzyme is believed to be ubiquinone. This is NADH dehydrogenase [ubiquinone] iron-sulfur protein 3 (NAD9) from Beta trigyna (Caucasian wild beet).